The primary structure comprises 265 residues: Probable cell division protein kinase ECU08_0230 (265 aa).

A Protein kinase domain is found at 4–263 (YILGALIGSG…IMEILENEYG (260 aa)). ATP-binding positions include 10–18 (IGSGTYGEV) and Lys-33. Asp-121 acts as the Proton acceptor in catalysis.

The protein belongs to the protein kinase superfamily. CMGC Ser/Thr protein kinase family. CDC2/CDKX subfamily.

The protein resides in the nucleus. It catalyses the reaction L-seryl-[protein] + ATP = O-phospho-L-seryl-[protein] + ADP + H(+). It carries out the reaction L-threonyl-[protein] + ATP = O-phospho-L-threonyl-[protein] + ADP + H(+). Functionally, may play a role in the control of the eukaryotic cell cycle. The sequence is that of Probable cell division protein kinase ECU08_0230 from Encephalitozoon cuniculi (strain GB-M1) (Microsporidian parasite).